Consider the following 445-residue polypeptide: uncharacterized protein (445 aa).

This is an uncharacterized protein from Xanthomonas euvesicatoria.